The primary structure comprises 72 residues: uncharacterized protein (72 aa).

It localises to the cytoplasm. Its subcellular location is the nucleus. This is an uncharacterized protein from Saccharomyces cerevisiae (strain ATCC 204508 / S288c) (Baker's yeast).